The chain runs to 187 residues: Elongation factor P (187 aa).

The protein belongs to the elongation factor P family.

It localises to the cytoplasm. The protein operates within protein biosynthesis; polypeptide chain elongation. Functionally, involved in peptide bond synthesis. Stimulates efficient translation and peptide-bond synthesis on native or reconstituted 70S ribosomes in vitro. Probably functions indirectly by altering the affinity of the ribosome for aminoacyl-tRNA, thus increasing their reactivity as acceptors for peptidyl transferase. This Mycoplasmopsis agalactiae (strain NCTC 10123 / CIP 59.7 / PG2) (Mycoplasma agalactiae) protein is Elongation factor P.